The sequence spans 136 residues: MNSQVKNKAVYWGTGRRKTSVARVRLIPGNGQIKINGRSGDDYLNFNPSHLNSVKAPLLTLGLENSYDIFVNVFGGGLTGQADAIKQGAARALCGLSPDNRKPLKTEGHLSRDPRSKERKKYGLKKARKAGQFSKR.

The disordered stretch occupies residues 95–136 (GLSPDNRKPLKTEGHLSRDPRSKERKKYGLKKARKAGQFSKR). A compositionally biased stretch (basic and acidic residues) spans 99–116 (DNRKPLKTEGHLSRDPRS). Basic residues predominate over residues 117–136 (KERKKYGLKKARKAGQFSKR).

Belongs to the universal ribosomal protein uS9 family.

In Prochlorococcus marinus subsp. pastoris (strain CCMP1986 / NIES-2087 / MED4), this protein is Small ribosomal subunit protein uS9.